The sequence spans 570 residues: Sulfite reductase [NADPH] hemoprotein beta-component (570 aa).

Positions 434, 440, 479, and 483 each coordinate [4Fe-4S] cluster. A siroheme-binding site is contributed by cysteine 483.

This sequence belongs to the nitrite and sulfite reductase 4Fe-4S domain family. In terms of assembly, alpha(8)-beta(8). The alpha component is a flavoprotein, the beta component is a hemoprotein. The cofactor is siroheme. Requires [4Fe-4S] cluster as cofactor.

The enzyme catalyses hydrogen sulfide + 3 NADP(+) + 3 H2O = sulfite + 3 NADPH + 4 H(+). It participates in sulfur metabolism; hydrogen sulfide biosynthesis; hydrogen sulfide from sulfite (NADPH route): step 1/1. In terms of biological role, component of the sulfite reductase complex that catalyzes the 6-electron reduction of sulfite to sulfide. This is one of several activities required for the biosynthesis of L-cysteine from sulfate. The sequence is that of Sulfite reductase [NADPH] hemoprotein beta-component from Escherichia coli O6:H1 (strain CFT073 / ATCC 700928 / UPEC).